The following is a 244-amino-acid chain: Small ribosomal subunit protein uS2 (244 aa).

It belongs to the universal ribosomal protein uS2 family.

The sequence is that of Small ribosomal subunit protein uS2 from Hydrogenovibrio crunogenus (strain DSM 25203 / XCL-2) (Thiomicrospira crunogena).